The sequence spans 224 residues: UPF0758 protein Hhal_2301 (224 aa).

The MPN domain occupies T102–L224. Zn(2+)-binding residues include H173, H175, and D186. A JAMM motif motif is present at residues H173–D186.

Belongs to the UPF0758 family.

In Halorhodospira halophila (strain DSM 244 / SL1) (Ectothiorhodospira halophila (strain DSM 244 / SL1)), this protein is UPF0758 protein Hhal_2301.